The following is a 356-amino-acid chain: Nicotinate-nucleotide--dimethylbenzimidazole phosphoribosyltransferase (356 aa).

Catalysis depends on Glu-317, which acts as the Proton acceptor.

The protein belongs to the CobT family. In terms of assembly, homodimer.

It catalyses the reaction 5,6-dimethylbenzimidazole + nicotinate beta-D-ribonucleotide = alpha-ribazole 5'-phosphate + nicotinate + H(+). It participates in nucleoside biosynthesis; alpha-ribazole biosynthesis; alpha-ribazole from 5,6-dimethylbenzimidazole: step 1/2. Functionally, catalyzes the synthesis of alpha-ribazole-5'-phosphate from nicotinate mononucleotide (NAMN) and 5,6-dimethylbenzimidazole (DMB). The protein is Nicotinate-nucleotide--dimethylbenzimidazole phosphoribosyltransferase of Salmonella gallinarum (strain 287/91 / NCTC 13346).